A 318-amino-acid chain; its full sequence is 2-dehydro-3-deoxygalactonokinase (318 aa).

Residues 35–39, tyrosine 90, 105–107, and arginine 169 each bind substrate; these read GAESN and YDR. Residues 167-169, 228-233, and 257-260 each bind ATP; these read NYR, TRGEDG, and GTGD. Substrate is bound by residues aspartate 260 and aspartate 296. The active-site Proton acceptor is aspartate 260.

It belongs to the carbohydrate kinase PfkB family. Homohexamer.

It carries out the reaction 2-dehydro-3-deoxy-D-galactonate + ATP = 2-dehydro-3-deoxy-6-phospho-D-galactonate + ADP + H(+). Functionally, involved in galactose catabolism. Catalyzes the phosphorylation of 2-keto-3-deoxygalactonate (KDGal) to produce 2-keto-3-deoxy-6-phosphogalactonate (KDPGal). Can also phosphorylate 2-keto-3-deoxygluconate (KDG) to 2-keto-3-deoxy-6-phosphogluconate (KDPG), but the catalytic efficiency for KDGal is 50-fold higher than for KDG. The protein is 2-dehydro-3-deoxygalactonokinase of Haloferax volcanii (strain ATCC 29605 / DSM 3757 / JCM 8879 / NBRC 14742 / NCIMB 2012 / VKM B-1768 / DS2) (Halobacterium volcanii).